The chain runs to 529 residues: Auxin response factor 13 (529 aa).

The segment at 1 to 22 (MARPPAATAPPPPPPPPPPPPP) is disordered. Positions 7–22 (ATAPPPPPPPPPPPPP) are enriched in pro residues. The segment at residues 128 to 234 (YAKQLTQSDA…KLLVGVRRAA (107 aa)) is a DNA-binding region (TF-B3). Disordered stretches follow at residues 443 to 462 (IVTP…PLSA) and 497 to 529 (PEGV…GARL). Polar residues predominate over residues 444-461 (VTPQNGSPPDNPVNTPLS). Acidic residues predominate over residues 499 to 510 (GVDDETATEEAS). Positions 511–523 (DTSLPDSLTNGHN) are enriched in polar residues.

Belongs to the ARF family. Homo and heterodimers. Expressed in roots, culms, leaves and young panicles.

It is found in the nucleus. Functionally, auxin response factors (ARFs) are transcriptional factors that bind specifically to the DNA sequence 5'-TGTCTC-3' found in the auxin-responsive promoter elements (AuxREs). This is Auxin response factor 13 (ARF13) from Oryza sativa subsp. japonica (Rice).